The chain runs to 338 residues: F420-dependent glucose-6-phosphate dehydrogenase (338 aa).

Aspartate 40 serves as a coordination point for coenzyme F420-(gamma-Glu)n. Histidine 41 serves as the catalytic Proton donor. Coenzyme F420-(gamma-Glu)n-binding positions include threonine 77 and threonine 108–glycine 109. Glutamate 110 functions as the Proton acceptor in the catalytic mechanism. Coenzyme F420-(gamma-Glu)n is bound by residues asparagine 113, glycine 178–glycine 179, and valine 181–valine 182. Residues threonine 196, lysine 199, lysine 260, and arginine 284 each contribute to the substrate site.

It belongs to the F420-dependent glucose-6-phosphate dehydrogenase family. As to quaternary structure, homodimer.

The enzyme catalyses oxidized coenzyme F420-(gamma-L-Glu)(n) + D-glucose 6-phosphate + H(+) = 6-phospho-D-glucono-1,5-lactone + reduced coenzyme F420-(gamma-L-Glu)(n). In terms of biological role, catalyzes the coenzyme F420-dependent oxidation of glucose 6-phosphate (G6P) to 6-phosphogluconolactone. This Gordonia bronchialis (strain ATCC 25592 / DSM 43247 / BCRC 13721 / JCM 3198 / KCTC 3076 / NBRC 16047 / NCTC 10667) (Rhodococcus bronchialis) protein is F420-dependent glucose-6-phosphate dehydrogenase.